Here is a 160-residue protein sequence, read N- to C-terminus: Large ribosomal subunit protein uL22c (160 aa).

Belongs to the universal ribosomal protein uL22 family. In terms of assembly, part of the 50S ribosomal subunit.

The protein resides in the plastid. The protein localises to the chloroplast. This protein binds specifically to 23S rRNA. Its function is as follows. The globular domain of the protein is located near the polypeptide exit tunnel on the outside of the subunit, while an extended beta-hairpin is found that lines the wall of the exit tunnel in the center of the 70S ribosome. This is Large ribosomal subunit protein uL22c (rpl22) from Olimarabidopsis pumila (Dwarf rocket).